Reading from the N-terminus, the 287-residue chain is Protease HtpX (287 aa).

The next 2 helical transmembrane spans lie at 4 to 24 (ILLFLATNLAVVLVLSVVLNI) and 36 to 56 (LSGLLVMAAVFGFGGAFISLL). A Zn(2+)-binding site is contributed by histidine 143. Glutamate 144 is an active-site residue. A Zn(2+)-binding site is contributed by histidine 147. The next 2 helical transmembrane spans lie at 158-178 (LMQGVVNTFVIFLSRFIANIV) and 192-212 (MVYFGVSMVLELVFGFLASFI). Glutamate 221 provides a ligand contact to Zn(2+).

Belongs to the peptidase M48B family. Zn(2+) serves as cofactor.

It localises to the cell inner membrane. The polypeptide is Protease HtpX (Vibrio cholerae serotype O1 (strain ATCC 39315 / El Tor Inaba N16961)).